The following is a 322-amino-acid chain: Ribose-phosphate pyrophosphokinase (322 aa).

ATP is bound by residues 43 to 45 (DGE) and 102 to 103 (RQ). Residues histidine 137 and aspartate 177 each contribute to the Mg(2+) site. The active site involves lysine 201. D-ribose 5-phosphate-binding positions include arginine 203, aspartate 227, and 231–235 (DTAGT).

The protein belongs to the ribose-phosphate pyrophosphokinase family. Class I subfamily. In terms of assembly, homohexamer. Requires Mg(2+) as cofactor.

The protein localises to the cytoplasm. The catalysed reaction is D-ribose 5-phosphate + ATP = 5-phospho-alpha-D-ribose 1-diphosphate + AMP + H(+). The protein operates within metabolic intermediate biosynthesis; 5-phospho-alpha-D-ribose 1-diphosphate biosynthesis; 5-phospho-alpha-D-ribose 1-diphosphate from D-ribose 5-phosphate (route I): step 1/1. In terms of biological role, involved in the biosynthesis of the central metabolite phospho-alpha-D-ribosyl-1-pyrophosphate (PRPP) via the transfer of pyrophosphoryl group from ATP to 1-hydroxyl of ribose-5-phosphate (Rib-5-P). The polypeptide is Ribose-phosphate pyrophosphokinase (Xylella fastidiosa (strain 9a5c)).